We begin with the raw amino-acid sequence, 240 residues long: Phosphoribosylaminoimidazole-succinocarboxamide synthase (240 aa).

This sequence belongs to the SAICAR synthetase family.

The catalysed reaction is 5-amino-1-(5-phospho-D-ribosyl)imidazole-4-carboxylate + L-aspartate + ATP = (2S)-2-[5-amino-1-(5-phospho-beta-D-ribosyl)imidazole-4-carboxamido]succinate + ADP + phosphate + 2 H(+). Its pathway is purine metabolism; IMP biosynthesis via de novo pathway; 5-amino-1-(5-phospho-D-ribosyl)imidazole-4-carboxamide from 5-amino-1-(5-phospho-D-ribosyl)imidazole-4-carboxylate: step 1/2. This is Phosphoribosylaminoimidazole-succinocarboxamide synthase from Wigglesworthia glossinidia brevipalpis.